The sequence spans 526 residues: Phenylacetaldehyde oxime monooxygenase CYP71AN24 (526 aa).

The chain crosses the membrane as a helical span at residues Ser22–Thr42. Cys465 serves as a coordination point for heme.

It belongs to the cytochrome P450 family. Heme is required as a cofactor. As to expression, expressed in seedlings and leaves.

The protein resides in the membrane. It carries out the reaction (E)-phenylacetaldehyde oxime + reduced [NADPH--hemoprotein reductase] + O2 = (R)-mandelonitrile + oxidized [NADPH--hemoprotein reductase] + 2 H2O + H(+). It catalyses the reaction phenylacetonitrile + reduced [NADPH--hemoprotein reductase] + O2 = (R)-mandelonitrile + oxidized [NADPH--hemoprotein reductase] + H2O + H(+). Involved in L-phenylalanine-derived cyanogenic glycoside biosynthesis, including prunasin and amygdalin defensive agents. Catalyzes the conversion of phenylacetaldoxime (PAOx) and phenylacetonitrile (PAN) into mandelonitrile (MAN). To a lower extent, can convert various aromatic aldoximes and nitriles; mediates the transformation of 4-hydroxyphenylacetaldoxime, 4-hydroxyphenylacetonitrile, indole-3-acetal-doxime and indole-3-acetonitrile into the corresponding hydroxynitriles, but cannot use the aliphatic compounds 2-methylpropanaloxime and 2-methylpropanenitrile as substrates. The protein is Phenylacetaldehyde oxime monooxygenase CYP71AN24 of Prunus mume (Japanese apricot).